The sequence spans 317 residues: Ribosomal protein L11 methyltransferase (317 aa).

Thr158, Gly179, Asp201, and Asn244 together coordinate S-adenosyl-L-methionine.

The protein belongs to the methyltransferase superfamily. PrmA family.

It localises to the cytoplasm. It carries out the reaction L-lysyl-[protein] + 3 S-adenosyl-L-methionine = N(6),N(6),N(6)-trimethyl-L-lysyl-[protein] + 3 S-adenosyl-L-homocysteine + 3 H(+). Its function is as follows. Methylates ribosomal protein L11. In Streptococcus mutans serotype c (strain ATCC 700610 / UA159), this protein is Ribosomal protein L11 methyltransferase.